We begin with the raw amino-acid sequence, 306 residues long: Aquaporin-1 (306 aa).

A compositionally biased stretch (polar residues) spans 1 to 23 (MASTHSSLTTVQNNANNKSNRTL). Positions 1-24 (MASTHSSLTTVQNNANNKSNRTLN) are disordered. Topologically, residues 1–59 (MASTHSSLTTVQNNANNKSNRTLNTERRLSMESSVFTLYNKAADELDTSQRSAFQACHR) are cytoplasmic. Residues 60-80 (EFLAEFIGTVILVLLTCGFCA) traverse the membrane as a helical segment. Residues 81–92 (EQTLHIEESKSW) lie on the Extracellular side of the membrane. Residues 93–113 (LTSSFGSGLSVLIGICVSGHV) traverse the membrane as a helical segment. Residues 114 to 145 (SGAHLNPAVTIAFCIFSGFPIRKVPSYITAQL) lie on the Cytoplasmic side of the membrane. The NPA 1 signature appears at 119–121 (NPA). The chain crosses the membrane as a helical span at residues 146–166 (LGAFAGAALLYIIIEPAIVQF). Residues 167-192 (DGGQRYILGEKSTAGIFGTYPPLYVG) lie on the Extracellular side of the membrane. A helical membrane pass occupies residues 193–213 (IGSAIASEIMGTAMLLLVIMV). The Cytoplasmic segment spans residues 214-226 (TGHPNNLPYKSAQ). The chain crosses the membrane as a helical span at residues 227-247 (GAMIALGITTISLCIGYTSGF). The Extracellular segment spans residues 248–278 (SLNPARDFGPRLFTAIAGWGFDVFKVYHYYA). The short motif at 250–252 (NPA) is the NPA 2 element. Residues 279-299 (LVPMFAPILGGLVGLMLMMPF) form a helical membrane-spanning segment. The Cytoplasmic portion of the chain corresponds to 300-306 (SFLSVRA).

This sequence belongs to the MIP/aquaporin (TC 1.A.8) family.

The protein resides in the cell membrane. It catalyses the reaction H2O(in) = H2O(out). Its function is as follows. Water channel required to facilitate the transport of water across membranes. Contributes to water uptake of spores during the early stages of spore germination. Aquaporins AQP1 and AQP2 act as extracellular pH sensors and enable the spores to hydrate under favorable conditions and to commence germination. Wounded vegetables and fruit present acidic pH, so the optimal pH range for germination is adapted to the relevant host pH. The protein is Aquaporin-1 of Rhizopus delemar (strain RA 99-880 / ATCC MYA-4621 / FGSC 9543 / NRRL 43880) (Mucormycosis agent).